The sequence spans 149 residues: Sec-independent protein translocase protein TatB (149 aa).

Residues 1–22 form a helical membrane-spanning segment; the sequence is MFDGIGFMELLLIGVLGLIVLG. Residues 86-113 are compositionally biased toward polar residues; sequence LKQAAQSVNRPYQVQDTPSAQDNQIHNP. A disordered region spans residues 86-149; it reads LKQAAQSVNR…DPRSNTKANG (64 aa). The span at 114–135 shows a compositional bias: low complexity; it reads ASQTVSTEASSTSASSAPKSES.

Belongs to the TatB family. As to quaternary structure, the Tat system comprises two distinct complexes: a TatABC complex, containing multiple copies of TatA, TatB and TatC subunits, and a separate TatA complex, containing only TatA subunits. Substrates initially bind to the TatABC complex, which probably triggers association of the separate TatA complex to form the active translocon.

The protein resides in the cell inner membrane. In terms of biological role, part of the twin-arginine translocation (Tat) system that transports large folded proteins containing a characteristic twin-arginine motif in their signal peptide across membranes. Together with TatC, TatB is part of a receptor directly interacting with Tat signal peptides. TatB may form an oligomeric binding site that transiently accommodates folded Tat precursor proteins before their translocation. The protein is Sec-independent protein translocase protein TatB of Shewanella oneidensis (strain ATCC 700550 / JCM 31522 / CIP 106686 / LMG 19005 / NCIMB 14063 / MR-1).